Reading from the N-terminus, the 5207-residue chain is E3 ubiquitin-protein ligase RNF213 (5207 aa).

Disordered regions lie at residues 1–20 (MECP…FCSQ) and 27–365 (PAAP…EADV). Positions 34–43 (SENNNSTMAS) are enriched in polar residues. Basic residues predominate over residues 89 to 100 (KKKKRKKKKKGN). Low complexity-rich tracts occupy residues 101 to 117 (KSAS…PASP) and 136 to 157 (SQAQ…ATTP). Residues 188 to 197 (SEAQSSPQFQ) are compositionally biased toward polar residues. Residues Ser-208 and Ser-217 each carry the phosphoserine modification. Residues 248–266 (GGSSEPGTELQTTEQQAGA) show a composition bias toward polar residues. Basic and acidic residues-rich tracts occupy residues 285 to 294 (AGKEMKEKTQ), 309 to 346 (HCQE…EGKN), and 353 to 362 (KNEKEQKNQE). The stretch at 343 to 374 (EGKNRSAAAVKNEKEQKNQEADVQEVKASTLS) forms a coiled coil. A Glycyl lysine isopeptide (Lys-Gly) (interchain with G-Cter in SUMO2) cross-link involves residue Lys-1151. Ser-1258 is subject to Phosphoserine. ATP is bound by residues 1995-2000 (GVGKSL), Glu-2098, Asp-2155, and Arg-2216. Ser-2273 bears the Phosphoserine mark. ATP contacts are provided by Lys-2499 and Ser-2574. Zn(2+) contacts are provided by Cys-3997, Cys-4000, Cys-4012, His-4014, Cys-4017, Cys-4020, Cys-4032, Cys-4035, Cys-4505, and His-4509. The RING-type zinc finger occupies 3997-4036 (CSICLGDAKDPVCLPCDHVHCLRCLRAWFASEQMICPYCL). The segment at 4483–4555 (MPEDLLAQAR…VKDKADRTQT (73 aa)) adopts an RZ-type zinc-finger fold. Cys-4516 acts as the Nucleophile; for E3 ubiquitin-lipopolysaccharide ligase activity in catalysis. 2 residues coordinate Zn(2+): Cys-4525 and Cys-4528.

This sequence belongs to the AAA ATPase family. Monomer. Interacts with UBE2L3/UBCH7; UBE2L3/UBCH7 is the most efficient ubiquitin-conjugating enzyme E2 for the ubiquitin ligase activity. Interacts with UBE2N/UBC13; promoting 'Lys-63'-linked ubiquitination of target proteins. In terms of assembly, (Microbial infection) Interacts with M.tuberculosis protein Rv3655c, which impairs caspase-8 activation and suppresses macrophage apoptosis by blocking the extrinsic pathway. Post-translationally, autoubiquitinated. In terms of tissue distribution, widely expressed (at protein level). Major isoform detected in all tissues examined. As to expression, minor isoform with restricted expression.

It localises to the cytoplasm. It is found in the cytosol. The protein localises to the lipid droplet. The enzyme catalyses S-ubiquitinyl-[E2 ubiquitin-conjugating enzyme]-L-cysteine + [acceptor protein]-L-lysine = [E2 ubiquitin-conjugating enzyme]-L-cysteine + N(6)-ubiquitinyl-[acceptor protein]-L-lysine.. The catalysed reaction is ATP + H2O = ADP + phosphate + H(+). The protein operates within protein modification; protein ubiquitination. Atypical E3 ubiquitin ligase that can catalyze ubiquitination of both proteins and lipids, and which is involved in various processes, such as lipid metabolism, angiogenesis and cell-autonomous immunity. Acts as a key immune sensor by catalyzing ubiquitination of the lipid A moiety of bacterial lipopolysaccharide (LPS) via its RZ-type zinc-finger: restricts the proliferation of cytosolic bacteria, such as Salmonella, by generating the bacterial ubiquitin coat through the ubiquitination of LPS. Also acts indirectly by mediating the recruitment of the LUBAC complex, which conjugates linear polyubiquitin chains. Ubiquitination of LPS triggers cell-autonomous immunity, such as antibacterial autophagy, leading to degradation of the microbial invader. Involved in lipid metabolism by regulating fat storage and lipid droplet formation; act by inhibiting the lipolytic process. Also regulates lipotoxicity by inhibiting desaturation of fatty acids. Also acts as an E3 ubiquitin-protein ligase via its RING-type zinc finger: mediates 'Lys-63'-linked ubiquitination of target proteins. Involved in the non-canonical Wnt signaling pathway in vascular development: acts by mediating ubiquitination and degradation of FLNA and NFATC2 downstream of RSPO3, leading to inhibit the non-canonical Wnt signaling pathway and promoting vessel regression. Also has ATPase activity; ATPase activity is required for ubiquitination of LPS. This Homo sapiens (Human) protein is E3 ubiquitin-protein ligase RNF213.